Consider the following 230-residue polypeptide: Phosphatidylserine decarboxylase proenzyme (230 aa).

Catalysis depends on Ser186, which acts as the Schiff-base intermediate with substrate; via pyruvic acid. Residue Ser186 is modified to Pyruvic acid (Ser); by autocatalysis.

The protein belongs to the phosphatidylserine decarboxylase family. PSD-A subfamily. Heterodimer of a large membrane-associated beta subunit and a small pyruvoyl-containing alpha subunit. Pyruvate serves as cofactor. Is synthesized initially as an inactive proenzyme. Formation of the active enzyme involves a self-maturation process in which the active site pyruvoyl group is generated from an internal serine residue via an autocatalytic post-translational modification. Two non-identical subunits are generated from the proenzyme in this reaction, and the pyruvate is formed at the N-terminus of the alpha chain, which is derived from the carboxyl end of the proenzyme. The post-translation cleavage follows an unusual pathway, termed non-hydrolytic serinolysis, in which the side chain hydroxyl group of the serine supplies its oxygen atom to form the C-terminus of the beta chain, while the remainder of the serine residue undergoes an oxidative deamination to produce ammonia and the pyruvoyl prosthetic group on the alpha chain.

It is found in the cell membrane. The enzyme catalyses a 1,2-diacyl-sn-glycero-3-phospho-L-serine + H(+) = a 1,2-diacyl-sn-glycero-3-phosphoethanolamine + CO2. The protein operates within phospholipid metabolism; phosphatidylethanolamine biosynthesis; phosphatidylethanolamine from CDP-diacylglycerol: step 2/2. Functionally, catalyzes the formation of phosphatidylethanolamine (PtdEtn) from phosphatidylserine (PtdSer). This is Phosphatidylserine decarboxylase proenzyme from Wolbachia sp. subsp. Brugia malayi (strain TRS).